The chain runs to 486 residues: V-type proton ATPase subunit B1 (486 aa).

Residue Gly-2 is modified to N-acetylglycine.

The protein belongs to the ATPase alpha/beta chains family. In terms of assembly, V-ATPase is a heteromultimeric enzyme composed of a peripheral catalytic V1 complex (components A to H) attached to an integral membrane V0 proton pore complex (components: a, c, c'', d and e).

The protein localises to the vacuole membrane. Non-catalytic subunit of the peripheral V1 complex of vacuolar ATPase. V-ATPase is responsible for acidifying a variety of intracellular compartments in eukaryotic cells. In Arabidopsis thaliana (Mouse-ear cress), this protein is V-type proton ATPase subunit B1 (VHA-B1).